Reading from the N-terminus, the 1217-residue chain is Disease resistance protein RPS4 (1217 aa).

Residues 14–175 (PQHQVFINFR…EIVKAVKTAL (162 aa)) enclose the TIR domain. 23 to 28 (RGADLR) serves as a coordination point for NAD(+). Residues 33–34 (SH) form an important for interaction with RRS1 region. The active site involves glutamate 88. The region spanning 211-472 (EQRLKDLEEK…FRSQDKDYVE (262 aa)) is the NB-ARC domain. 11 LRR repeats span residues 581-606 (MGNL…KINI), 614-636 (LKEV…DFNP), 637-659 (INLV…DKDT), 682-706 (AEKL…MKKM), 708-728 (MLAF…EMNL), 729-749 (ISLK…PLIS), 750-774 (DNIE…KLQR), 796-818 (LKAL…EIDI), 819-842 (SFLN…SVQY), 843-860 (LCLS…GISQ), and 861-887 (LSQL…NLQC). The segment at 1161 to 1195 (TTEGVDGRVNKKKKTRMDNGRPKKKQRSGRDDNQT) is disordered. The Nuclear localization signal motif lies at 1170 to 1177 (NKKKKTRM).

Belongs to the disease resistance TIR-NB-LRR family. As to quaternary structure, interacts with EDS1. Interacts with SRFR1. Interacts with RRS1.

Its subcellular location is the endomembrane system. The protein localises to the cytoplasm. It localises to the nucleus. The enzyme catalyses NAD(+) + H2O = ADP-D-ribose + nicotinamide + H(+). Its function is as follows. Disease resistance (R) protein that specifically recognizes the AvrRps4 type III effector avirulence protein from P.syringae. Resistance proteins guard the plant against pathogens that contain an appropriate avirulence protein via an indirect interaction with this avirulence protein. That triggers a defense system including the hypersensitive response, which restricts the pathogen growth. Probably acts as a NAD(+) hydrolase (NADase): in response to activation, catalyzes cleavage of NAD(+) into ADP-D-ribose (ADPR) and nicotinamide; NAD(+) cleavage triggering a defense system that promotes cell death. The combined presence of both regular and alternative RPS4 transcripts with truncated open reading frames (ORFs) is necessary for function. RPS4 function is regulated at multiple levels, including gene expression, alternative splicing, and protein stability. When over-expressed, confers temperature-conditioned EDS1-dependent auto-immunity. Heterodimerization with RRS1 is required to form a functional complex to recognize AvrRps4 and PopP2. Abscisic acid deficiency enhances nuclear accumulation of RPS4 and its cell death-inducing activity. The sequence is that of Disease resistance protein RPS4 from Arabidopsis thaliana (Mouse-ear cress).